Reading from the N-terminus, the 829-residue chain is UBA domain-containing protein 8 (829 aa).

One can recognise an EH 1 domain in the interval E10–K109. An EF-hand 1 domain is found at L43–A78. Residues G93–F121 form a disordered region. A phosphoserine mark is found at S112 and S113. EH domains follow at residues E129 to E225 and D300 to T398. Residues L333 to R368 enclose the EF-hand 2 domain. 2 stretches are compositionally biased toward polar residues: residues S466 to I506 and T574 to E590. 3 disordered regions span residues S466 to S520, T574 to L614, and K724 to E785. The stretch at E602–S709 forms a coiled coil. Over residues T728–T737 the composition is skewed to pro residues. The span at H764–V774 shows a compositional bias: polar residues. Positions S775–E785 are enriched in low complexity. In terms of domain architecture, UBA spans Q788–S828.

This Schizosaccharomyces pombe (strain 972 / ATCC 24843) (Fission yeast) protein is UBA domain-containing protein 8 (ucp8).